The following is a 727-amino-acid chain: Tubulin polyglutamylase TTLL11 (727 aa).

Residues 1–12 (MRRSSPEKKPEA) are compositionally biased toward basic and acidic residues. The interval 1-88 (MRRSSPEKKP…ARVVRRLPPA (88 aa)) is disordered. Residues 17 to 34 (DAAAAAAATAAATESLPA) are compositionally biased toward low complexity. Composition is skewed to basic and acidic residues over residues 49-63 (DPERLELEEQPKDVG) and 72-81 (HAPEEGEARV). A TTL domain is found at 125–477 (PVTVDSSKAR…EVKVAVIRDT (353 aa)). ATP contacts are provided by residues Lys-246, 252–253 (QG), 279–282 (QEYI), and 292–294 (KFD). Gln-252 provides a ligand contact to a protein. Arg-318 is an L-glutamate binding site. 340 to 341 (TN) lines the ATP pocket. Positions 342, 343, and 362 each coordinate L-glutamate. Mg(2+)-binding residues include Asp-425, Glu-438, and Asn-440. The interval 464–566 (LVDEEVKVAV…SICLKQVFPK (103 aa)) is c-MTBD region. Lys-470 lines the L-glutamate pocket. Disordered regions lie at residues 530–551 (KSFTSKEDLNCDPTGGDSEPNP) and 694–727 (RPLQRNPPQMNRPEHSATGSSAPRVIGASKLSQS).

It belongs to the tubulin--tyrosine ligase family. Mg(2+) serves as cofactor. As to expression, highly expressed in brain, kidney, liver, lung, muscle and testis. Expressed in heart, spleen and trachea. In the brain, expressed in ependymal cilia, cortex, corpus callosum and striatum.

It localises to the cytoplasm. It is found in the cytoskeleton. The protein localises to the cilium basal body. It carries out the reaction L-glutamyl-[protein] + L-glutamate + ATP = gamma-L-glutamyl-L-glutamyl-[protein] + ADP + phosphate + H(+). The enzyme catalyses (L-glutamyl)(n)-gamma-L-glutamyl-L-glutamyl-[protein] + L-glutamate + ATP = (L-glutamyl)(n+1)-gamma-L-glutamyl-L-glutamyl-[protein] + ADP + phosphate + H(+). Polyglutamylase which modifies tubulin, generating polyglutamate side chains of variable lengths on the gamma-carboxyl group of specific glutamate residues within the C-terminal tail of tubulin. Preferentially mediates ATP-dependent polyglutamate long side-chain elongation over the initiation step of the polyglutamylation reaction. Preferentially modifies the alpha-tubulin tail over a beta-tail. Required for CCSAP localization to both spindle and cilia microtubules. Promotes tubulin polyglutamylation which stimulates spastin/SPAST-mediated microtubule severing, thereby regulating microtubule functions. The chain is Tubulin polyglutamylase TTLL11 from Mus musculus (Mouse).